Consider the following 245-residue polypeptide: 1-(5-phosphoribosyl)-5-[(5-phosphoribosylamino)methylideneamino] imidazole-4-carboxamide isomerase (245 aa).

Asp-7 functions as the Proton acceptor in the catalytic mechanism. The active-site Proton donor is Asp-129.

The protein belongs to the HisA/HisF family.

The protein resides in the cytoplasm. It carries out the reaction 1-(5-phospho-beta-D-ribosyl)-5-[(5-phospho-beta-D-ribosylamino)methylideneamino]imidazole-4-carboxamide = 5-[(5-phospho-1-deoxy-D-ribulos-1-ylimino)methylamino]-1-(5-phospho-beta-D-ribosyl)imidazole-4-carboxamide. It participates in amino-acid biosynthesis; L-histidine biosynthesis; L-histidine from 5-phospho-alpha-D-ribose 1-diphosphate: step 4/9. The chain is 1-(5-phosphoribosyl)-5-[(5-phosphoribosylamino)methylideneamino] imidazole-4-carboxamide isomerase from Cronobacter sakazakii (strain ATCC BAA-894) (Enterobacter sakazakii).